The sequence spans 204 residues: Large ribosomal subunit protein bL25 (204 aa).

The disordered stretch occupies residues 1 to 20 (MSETYELKAETRDRVGKGSS).

It belongs to the bacterial ribosomal protein bL25 family. CTC subfamily. As to quaternary structure, part of the 50S ribosomal subunit; part of the 5S rRNA/L5/L18/L25 subcomplex. Contacts the 5S rRNA. Binds to the 5S rRNA independently of L5 and L18.

Its function is as follows. This is one of the proteins that binds to the 5S RNA in the ribosome where it forms part of the central protuberance. This is Large ribosomal subunit protein bL25 from Rhizobium meliloti (strain 1021) (Ensifer meliloti).